Here is a 140-residue protein sequence, read N- to C-terminus: Large ribosomal subunit protein uL16 (140 aa).

Residues 1 to 17 show a composition bias toward basic residues; the sequence is MPLMPKRVKHRKMHRGS. The tract at residues 1–21 is disordered; it reads MPLMPKRVKHRKMHRGSRSGN.

This sequence belongs to the universal ribosomal protein uL16 family. As to quaternary structure, part of the 50S ribosomal subunit.

Its function is as follows. Binds 23S rRNA and is also seen to make contacts with the A and possibly P site tRNAs. The sequence is that of Large ribosomal subunit protein uL16 from Akkermansia muciniphila (strain ATCC BAA-835 / DSM 22959 / JCM 33894 / BCRC 81048 / CCUG 64013 / CIP 107961 / Muc).